Consider the following 557-residue polypeptide: Myo-inositol transporter 2 (557 aa).

Residues 1–76 (MDFNNIPLAT…ENGEGFEAEK (76 aa)) are Cytoplasmic-facing. Residues 24 to 69 (EMTTRPSETKKKVPFSEDMREIPSLPNEEEANATDPQANEVADENG) form a disordered region. Over residues 30-44 (SETKKKVPFSEDMRE) the composition is skewed to basic and acidic residues. The chain crosses the membrane as a helical span at residues 77 to 97 (ISSWIWVLSAVAGISGLLFGY). The Extracellular portion of the chain corresponds to 98 to 99 (DT). Residues 100–120 (GVISGALAVLGSDLGHVLSSG) traverse the membrane as a helical segment. Over 121 to 123 (QKE) the chain is Cytoplasmic. Residues 124–144 (LITSATSFAALISATTSGWLA) form a helical membrane-spanning segment. Residues 145–157 (DWVGRKRLLLCAD) are Extracellular-facing. The chain crosses the membrane as a helical span at residues 158 to 178 (AIFVIGSVIMAASRNVAMMVV). The Cytoplasmic portion of the chain corresponds to 179–180 (GR). The helical transmembrane segment at 181–201 (FIVGYGIGLTSLIVPMYITEL) threads the bilayer. Over 202 to 209 (APARLRGR) the chain is Extracellular. Residues 210-230 (LVIIYVVFITGGQLIAYSLNA) traverse the membrane as a helical segment. At 231-240 (AFEHVHQGWR) the chain is on the cytoplasmic side. The helical transmembrane segment at 241-261 (IMFGIGAAPALGQLISLFWTP) threads the bilayer. Over 262-367 (ESPRYLLRHN…IFQSVGFKNS (106 aa)) the chain is Extracellular. A helical membrane pass occupies residues 368-388 (ISVSIVVGATNFVFTIVAFMF). Residues 389–396 (IDRIGRRR) are Cytoplasmic-facing. A helical transmembrane segment spans residues 397-417 (ILLCTSAVMIAGLALCAIAYH). Over 418–432 (FLPADTTQNTNSGWQ) the chain is Extracellular. Residues 433–453 (YVVLASIIIFLASYASGIGNI) form a helical membrane-spanning segment. The Cytoplasmic segment spans residues 454–468 (PWQQAELFPMEVRAL). Residues 469–489 (GAGFSTAINWVGNLIISASFL) form a helical membrane-spanning segment. Residues 490 to 498 (TMMESITPT) lie on the Extracellular side of the membrane. The helical transmembrane segment at 499-519 (GTFALFAGFCFVGLVTSYFTY) threads the bilayer. At 520-557 (PELAGMSIENIHKLLEKGFWQAVKESTKRVRKGRIDEA) the chain is on the cytoplasmic side.

It belongs to the major facilitator superfamily. Sugar transporter (TC 2.A.1.1) family.

The protein localises to the membrane. It catalyses the reaction myo-inositol(out) + H(+)(out) = myo-inositol(in) + H(+)(in). Its function is as follows. Transporter for myo-inositol. In Schizosaccharomyces pombe (strain 972 / ATCC 24843) (Fission yeast), this protein is Myo-inositol transporter 2 (itr2).